Here is a 798-residue protein sequence, read N- to C-terminus: Cold shock domain-containing protein E1 (798 aa).

An N-acetylmethionine modification is found at methionine 1. Positions 26–87 (ETGVIEKLLT…RTGKPIAVKL (62 aa)) constitute a CSD 1 domain. N6-acetyllysine is present on lysine 81. A Glycyl lysine isopeptide (Lys-Gly) (interchain with G-Cter in SUMO2) cross-link involves residue lysine 91. Serine 123 is subject to Phosphoserine. In terms of domain architecture, CSD 2; truncated spans 136–179 (VFYLTYTPEDVEGNVQLETGDKINFVIDNNKHTGAVSARNIMLL). The 60-residue stretch at 186–245 (CQGVVCAMKEAFGFIERGDVVKEIFFHYSEFKGDLETLQPGDDVEFTIKDRNGKEVATDV) folds into the CSD 3 domain. The residue at position 276 (serine 276) is a Phosphoserine. The 41-residue stretch at 297 to 337 (LPFGDKDTKSKVTLLEGDHVRFNISTDRRDKLERATNIEVL) folds into the CSD 4; truncated domain. CSD domains lie at 349-410 (EMGV…AIRI) and 447-507 (NKGK…ATCV). Serine 514 carries the phosphoserine modification. The region spanning 519-579 (LLGYVATLKD…KGNKVSAEKV (61 aa)) is the CSD 7 domain. Phosphoserine is present on serine 584. CSD domains lie at 610-670 (PTQT…AYNI) and 674-735 (RRAT…ACNV). Residues 748 to 789 (PRPDRLVNRLKNITLDDASAPRLMVLRQPRGPDNSMGFGAER) form the SUZ-C domain. The residue at position 761 (threonine 761) is a Phosphothreonine.

This sequence belongs to the UNR family. Component of a multi subunit autoregulatory ribonucleoprotein complex (ARC), at least composed of IGF2BP1, PABPC1 and CSDE1. Interacts with STRAP. Part of a complex associated with the FOS mCRD domain and consisting of PABPC1, PAIP1, HNRPD and SYNCRIP. The interaction with PABPC1 is direct and RNA-independent. Interacts with EIF4ENIF1/4E-T.

It localises to the cytoplasm. The protein resides in the stress granule. It is found in the P-body. RNA-binding protein involved in translationally coupled mRNA turnover. Implicated with other RNA-binding proteins in the cytoplasmic deadenylation/translational and decay interplay of the FOS mRNA mediated by the major coding-region determinant of instability (mCRD) domain. Required for efficient formation of stress granules. In terms of biological role, (Microbial infection) Required for internal initiation of translation of human rhinovirus RNA. The polypeptide is Cold shock domain-containing protein E1 (Homo sapiens (Human)).